Consider the following 82-residue polypeptide: Putative membrane protein insertion efficiency factor (82 aa).

Belongs to the UPF0161 family.

Its subcellular location is the cell inner membrane. Its function is as follows. Could be involved in insertion of integral membrane proteins into the membrane. The protein is Putative membrane protein insertion efficiency factor of Aeromonas salmonicida (strain A449).